A 109-amino-acid chain; its full sequence is Large ribosomal subunit protein eL30 (109 aa).

The protein belongs to the eukaryotic ribosomal protein eL30 family.

The chain is Large ribosomal subunit protein eL30 (RPL30) from Yarrowia lipolytica (strain CLIB 122 / E 150) (Yeast).